Here is a 111-residue protein sequence, read N- to C-terminus: UPF0060 membrane protein Aave_2845 (111 aa).

4 helical membrane passes run 7 to 27, 33 to 53, 63 to 83, and 90 to 110; these read FLLY…PWLW, SAWL…LLTL, AAYG…VDGI, and LAGA…PRGA.

Belongs to the UPF0060 family.

It localises to the cell inner membrane. This is UPF0060 membrane protein Aave_2845 from Paracidovorax citrulli (strain AAC00-1) (Acidovorax citrulli).